The chain runs to 535 residues: Methylmalonate-semialdehyde/malonate-semialdehyde dehydrogenase [acylating], mitochondrial (535 aa).

Residues 1-32 (MAAAVAAAAAMRSRILQVSSKVNATWYPASSF) constitute a mitochondrion transit peptide. N6-acetyllysine; alternate occurs at positions 47, 52, 55, and 76. An N6-succinyllysine; alternate mark is found at Lys-47, Lys-52, Lys-55, and Lys-76. Lys-87 carries the N6-acetyllysine modification. N6-acetyllysine; alternate is present on residues Lys-117 and Lys-129. An N6-succinyllysine; alternate mark is found at Lys-117 and Lys-129. Positions 183, 185, 209, 212, 213, and 262 each coordinate NAD(+). Residue Ser-262 is modified to Phosphoserine. Position 298 is an N6-acetyllysine (Lys-298). Catalysis depends on Cys-317, which acts as the Nucleophile. Residues Lys-330 and Lys-331 each carry the N6-acetyllysine modification. Lys-364 and Lys-376 each carry N6-acetyllysine; alternate. Residues Lys-364 and Lys-376 each carry the N6-succinyllysine; alternate modification. Residue Ser-380 is modified to Phosphoserine. An N6-succinyllysine modification is found at Lys-391. Residue Glu-417 participates in NAD(+) binding. The residue at position 500 (Lys-500) is an N6-acetyllysine. N6-succinyllysine is present on Lys-517.

The protein belongs to the aldehyde dehydrogenase family. As to quaternary structure, homotetramer. Post-translationally, acetylation of Lys-55; Lys-117 and Lys-331 is observed in liver mitochondria from fasted mice but not from fed mice.

Its subcellular location is the mitochondrion. It carries out the reaction 3-oxopropanoate + NAD(+) + CoA + H2O = hydrogencarbonate + acetyl-CoA + NADH + H(+). The enzyme catalyses 2-methyl-3-oxopropanoate + NAD(+) + CoA + H2O = propanoyl-CoA + hydrogencarbonate + NADH + H(+). It catalyses the reaction (R)-2-methyl-3-oxopropanoate + NAD(+) + CoA + H2O = propanoyl-CoA + hydrogencarbonate + NADH + H(+). The catalysed reaction is (S)-2-methyl-3-oxopropanoate + NAD(+) + CoA + H2O = propanoyl-CoA + hydrogencarbonate + NADH + H(+). Malonate and methylmalonate semialdehyde dehydrogenase involved in the catabolism of valine, thymine, and compounds catabolized by way of beta-alanine, including uracil and cytidine. This Mus musculus (Mouse) protein is Methylmalonate-semialdehyde/malonate-semialdehyde dehydrogenase [acylating], mitochondrial.